We begin with the raw amino-acid sequence, 176 residues long: Translation initiation factor IF-3 (176 aa).

Belongs to the IF-3 family. Monomer.

Its subcellular location is the cytoplasm. Its function is as follows. IF-3 binds to the 30S ribosomal subunit and shifts the equilibrium between 70S ribosomes and their 50S and 30S subunits in favor of the free subunits, thus enhancing the availability of 30S subunits on which protein synthesis initiation begins. This is Translation initiation factor IF-3 from Streptococcus pyogenes serotype M18 (strain MGAS8232).